The chain runs to 177 residues: ATP synthase subunit delta (177 aa).

It belongs to the ATPase delta chain family. As to quaternary structure, F-type ATPases have 2 components, F(1) - the catalytic core - and F(0) - the membrane proton channel. F(1) has five subunits: alpha(3), beta(3), gamma(1), delta(1), epsilon(1). F(0) has three main subunits: a(1), b(2) and c(10-14). The alpha and beta chains form an alternating ring which encloses part of the gamma chain. F(1) is attached to F(0) by a central stalk formed by the gamma and epsilon chains, while a peripheral stalk is formed by the delta and b chains.

Its subcellular location is the cell inner membrane. Functionally, f(1)F(0) ATP synthase produces ATP from ADP in the presence of a proton or sodium gradient. F-type ATPases consist of two structural domains, F(1) containing the extramembraneous catalytic core and F(0) containing the membrane proton channel, linked together by a central stalk and a peripheral stalk. During catalysis, ATP synthesis in the catalytic domain of F(1) is coupled via a rotary mechanism of the central stalk subunits to proton translocation. Its function is as follows. This protein is part of the stalk that links CF(0) to CF(1). It either transmits conformational changes from CF(0) to CF(1) or is implicated in proton conduction. The polypeptide is ATP synthase subunit delta (Shigella flexneri).